Reading from the N-terminus, the 884-residue chain is E3 ubiquitin-protein ligase BRE1-like 1 (884 aa).

The disordered stretch occupies residues 1-37; it reads MGSTGEPDRKRRLSSSVAPGGGAPVSPAKRLAVAPTS. Positions 49–86 form a coiled coil; the sequence is YKNQKLSEQLEAHKFEYRALENKFAGLKEKQRTHNETL. The tract at residues 107–127 is disordered; the sequence is KSGSPNSSPGSGHNNVQKDGT. The span at 108–121 shows a compositional bias: low complexity; that stretch reads SGSPNSSPGSGHNN. Coiled coils occupy residues 216–541, 580–663, 696–762, and 789–827; these read LNNV…ELKL, SKLE…LQQI, RNLQ…QSLD, and KKRI…KEYR. The segment at 832 to 871 adopts an RING-type zinc-finger fold; that stretch reads CGICHDRQKEVVITKCYHLFCNQCIQKSLGNRQRRCPSCS.

The protein belongs to the BRE1 family.

Its subcellular location is the nucleus. It carries out the reaction S-ubiquitinyl-[E2 ubiquitin-conjugating enzyme]-L-cysteine + [acceptor protein]-L-lysine = [E2 ubiquitin-conjugating enzyme]-L-cysteine + N(6)-ubiquitinyl-[acceptor protein]-L-lysine.. Its pathway is protein modification; protein ubiquitination. Its function is as follows. E3 ubiquitin-protein ligase that monoubiquitinates H2B to form H2BK143ub1. H2BK143ub1 gives a specific tag for epigenetic transcriptional activation and is also prerequisite for H3K4me and maybe H3K79me. It thereby plays a central role in histone code and gene regulation. Forms a ubiquitin ligase complex in cooperation with the E2 enzyme UBC2/RAD6. This is E3 ubiquitin-protein ligase BRE1-like 1 (BRE1A) from Oryza sativa subsp. indica (Rice).